Reading from the N-terminus, the 648-residue chain is EF-hand domain-containing protein 1 (648 aa).

Residues 1 to 45 are required for its localization in the mitotic spindle and interaction with alpha-tubulin; that stretch reads MGTNPVHGLPFLPGSSFTDSTKTAFHRSQTLNYRNGYAVVRRPTM. 3 DM10 domains span residues 93-198, 239-359, and 416-520; these read DKKV…ESQG, DKQV…KDKF, and DNKV…ESNA. In terms of domain architecture, EF-hand spans 582–617; the sequence is SYKENLRETFQMYDKDESGYVDRETFFKICETLNVP.

As to quaternary structure, microtubule inner protein component of sperm flagellar doublet microtubules. Interacts with the C-terminus of CACNA1E. Interacts with alpha-tubulin. In terms of tissue distribution, expressed in adult brain including hippocampus, cerebellum, cerebral cortex, thalamus, hypothalamus, amygdala and upper brainstem. Expressed in soma and dentrites of pyramidal neurons of the hippocampal CA1 region, pyramidal neurons of the cerebral cortex and Purkinje cells of cerebellum. Highly expressed in testis, trachea, and oviduct, moderately in lung, and slightly in brain. Highly expressed in sperm flagella and tracheal cilia (at protein level).

It localises to the cytoplasm. Its subcellular location is the cytoskeleton. It is found in the cilium axoneme. The protein resides in the flagellum axoneme. The protein localises to the microtubule organizing center. It localises to the centrosome. Its subcellular location is the spindle. It is found in the spindle pole. Microtubule inner protein (MIP) part of the dynein-decorated doublet microtubules (DMTs) in cilia axoneme, which is required for motile cilia beating. Microtubule-associated protein which regulates cell division and neuronal migration during cortical development. Necessary for radial and tangential cell migration during brain development, possibly acting as a regulator of cell morphology and process formation during migration. May enhance calcium influx through CACNA1E and stimulate programmed cell death. Overexpression of EFHC1 in hippocampal primary culture neurons induced apoptosis. This chain is EF-hand domain-containing protein 1 (Efhc1), found in Mus musculus (Mouse).